Reading from the N-terminus, the 256-residue chain is ATP synthase peripheral stalk subunit b, mitochondrial (256 aa).

Residues 1-42 (MLSRVVLSAAATAAPCLKNAAALGPGVLQATRAFHTGQPRLA) constitute a mitochondrion transit peptide. Lys-131 carries the post-translational modification N6-succinyllysine. Lys-139, Lys-154, Lys-162, Lys-221, Lys-225, Lys-233, and Lys-244 each carry N6-acetyllysine.

The protein belongs to the eukaryotic ATPase B chain family. As to quaternary structure, component of the ATP synthase complex composed at least of ATP5F1A/subunit alpha, ATP5F1B/subunit beta, ATP5MC1/subunit c (homooctomer), MT-ATP6/subunit a, MT-ATP8/subunit 8, ATP5ME/subunit e, ATP5MF/subunit f, ATP5MG/subunit g, ATP5MK/subunit k, ATP5MJ/subunit j, ATP5F1C/subunit gamma, ATP5F1D/subunit delta, ATP5F1E/subunit epsilon, ATP5PF/subunit F6, ATP5PB/subunit b, ATP5PD/subunit d, ATP5PO/subunit OSCP. ATP synthase complex consists of a soluble F(1) head domain (subunits alpha(3) and beta(3)) - the catalytic core - and a membrane F(0) domain - the membrane proton channel (subunits c, a, 8, e, f, g, k and j). These two domains are linked by a central stalk (subunits gamma, delta, and epsilon) rotating inside the F1 region and a stationary peripheral stalk (subunits F6, b, d, and OSCP).

The protein localises to the mitochondrion. The protein resides in the mitochondrion inner membrane. Its function is as follows. Subunit b, of the mitochondrial membrane ATP synthase complex (F(1)F(0) ATP synthase or Complex V) that produces ATP from ADP in the presence of a proton gradient across the membrane which is generated by electron transport complexes of the respiratory chain. ATP synthase complex consist of a soluble F(1) head domain - the catalytic core - and a membrane F(1) domain - the membrane proton channel. These two domains are linked by a central stalk rotating inside the F(1) region and a stationary peripheral stalk. During catalysis, ATP synthesis in the catalytic domain of F(1) is coupled via a rotary mechanism of the central stalk subunits to proton translocation. In vivo, can only synthesize ATP although its ATP hydrolase activity can be activated artificially in vitro. Part of the complex F(0) domain. Part of the complex F(0) domain and the peripheric stalk, which acts as a stator to hold the catalytic alpha(3)beta(3) subcomplex and subunit a/ATP6 static relative to the rotary elements. This is ATP synthase peripheral stalk subunit b, mitochondrial from Mus musculus (Mouse).